Consider the following 248-residue polypeptide: 2,3-bisphosphoglycerate-dependent phosphoglycerate mutase (248 aa).

Substrate contacts are provided by residues 8-15 (RHGESGWN) and arginine 58. Histidine 9 functions as the Tele-phosphohistidine intermediate in the catalytic mechanism. Residues 82 to 101 (GTGEDRTEREDGSRKDRKEK) form a disordered region. Glutamate 124 acts as the Proton donor/acceptor in catalysis. Residues 124–127 (ERYY) and lysine 135 each bind substrate.

It belongs to the phosphoglycerate mutase family. BPG-dependent PGAM subfamily.

It carries out the reaction (2R)-2-phosphoglycerate = (2R)-3-phosphoglycerate. Its pathway is carbohydrate degradation; glycolysis; pyruvate from D-glyceraldehyde 3-phosphate: step 3/5. In terms of biological role, catalyzes the interconversion of 2-phosphoglycerate and 3-phosphoglycerate. This chain is 2,3-bisphosphoglycerate-dependent phosphoglycerate mutase, found in Methanosarcina acetivorans (strain ATCC 35395 / DSM 2834 / JCM 12185 / C2A).